The sequence spans 305 residues: Glycine--tRNA ligase alpha subunit (305 aa).

It belongs to the class-II aminoacyl-tRNA synthetase family. In terms of assembly, tetramer of two alpha and two beta subunits.

The protein resides in the cytoplasm. It catalyses the reaction tRNA(Gly) + glycine + ATP = glycyl-tRNA(Gly) + AMP + diphosphate. The polypeptide is Glycine--tRNA ligase alpha subunit (Streptococcus suis (strain 98HAH33)).